Here is a 94-residue protein sequence, read N- to C-terminus: Co-chaperonin GroES (94 aa).

It belongs to the GroES chaperonin family. In terms of assembly, heptamer of 7 subunits arranged in a ring. Interacts with the chaperonin GroEL.

It localises to the cytoplasm. Its function is as follows. Together with the chaperonin GroEL, plays an essential role in assisting protein folding. The GroEL-GroES system forms a nano-cage that allows encapsulation of the non-native substrate proteins and provides a physical environment optimized to promote and accelerate protein folding. GroES binds to the apical surface of the GroEL ring, thereby capping the opening of the GroEL channel. This is Co-chaperonin GroES from Clostridium botulinum (strain Alaska E43 / Type E3).